The sequence spans 2555 residues: Neurogenic locus notch homolog protein 1 (2555 aa).

A signal peptide spans 1 to 18 (MPPLLAPLLCLALLPALA). Residues 19 to 1735 (ARGPRCSQPG…VEPPPPAQLH (1717 aa)) lie on the Extracellular side of the membrane. 4 consecutive EGF-like domains span residues 20-58 (RGPR…PRCQ), 59-99 (DPNP…PLCL), 102-139 (LDNA…KSCQ), and 140-176 (QADP…PTCR). Cystine bridges form between cysteine 24–cysteine 37, cysteine 31–cysteine 46, cysteine 48–cysteine 57, cysteine 63–cysteine 74, cysteine 68–cysteine 87, cysteine 89–cysteine 98, cysteine 106–cysteine 117, cysteine 111–cysteine 127, cysteine 129–cysteine 138, cysteine 144–cysteine 155, cysteine 149–cysteine 164, cysteine 166–cysteine 175, cysteine 182–cysteine 195, cysteine 189–cysteine 204, cysteine 206–cysteine 215, cysteine 222–cysteine 233, cysteine 227–cysteine 243, cysteine 245–cysteine 254, cysteine 261–cysteine 272, cysteine 266–cysteine 281, cysteine 283–cysteine 292, cysteine 299–cysteine 312, cysteine 306–cysteine 321, cysteine 323–cysteine 332, cysteine 339–cysteine 350, cysteine 344–cysteine 359, cysteine 361–cysteine 370, cysteine 376–cysteine 387, cysteine 381–cysteine 398, cysteine 400–cysteine 409, cysteine 416–cysteine 429, cysteine 423–cysteine 438, and cysteine 440–cysteine 449. Asparagine 41 carries N-linked (GlcNAc...) asparagine glycosylation. Serine 65 carries an O-linked (Glc...) serine glycan. Residue threonine 73 is glycosylated (O-linked (Fuc...) threonine). O-linked (Fuc...) threonine glycosylation occurs at threonine 116. Serine 146 carries an O-linked (Glc...) serine glycan. In terms of domain architecture, EGF-like 5; calcium-binding spans 178 to 216 (DVNECGQKPGLCRHGGTCHNEVGSYRCVCRATHTGPNCE). A glycan (O-linked (Fuc...) threonine) is linked at threonine 194. The EGF-like 6 domain maps to 218 to 255 (PYVPCSPSPCQNGGTCRPTGDVTHECACLPGFTGQNCE). A glycan (O-linked (Fuc...) threonine; alternate) is linked at threonine 232. O-linked (GalNAc...) threonine; alternate glycosylation occurs at threonine 232. Residues 257–293 (NIDDCPGNNCKNGGACVDGVNTYNCRCPPEWTGQYCT) form the EGF-like 7; calcium-binding domain. In terms of domain architecture, EGF-like 8; calcium-binding spans 295-333 (DVDECQLMPNACQNGGTCHNTHGGYNCVCVNGWTGEDCS). Residue threonine 311 is glycosylated (O-linked (Fuc...) threonine). In terms of domain architecture, EGF-like 9; calcium-binding spans 335–371 (NIDDCASAACFHGATCHDRVASFYCECPHGRTGLLCH). The O-linked (Glc...) serine glycan is linked to serine 341. O-linked (Fuc...) threonine glycosylation is present at threonine 349. The EGF-like 10 domain maps to 372-410 (LNDACISNPCNEGSNCDTNPVNGKAICTCPSGYTGPACS). O-linked (Glc...) serine glycosylation occurs at serine 378. The 39-residue stretch at 412-450 (DVDECSLGANPCEHAGKCINTLGSFECQCLQGYTGPRCE) folds into the EGF-like 11; calcium-binding domain. The interval 420 to 421 (AN) is interaction with DLL4. Residues threonine 432 and serine 435 each contribute to the Ca(2+) site. An O-linked (Glc...) serine glycan is attached at serine 435. The segment at 448–452 (RCEID) is interaction with DLL4. Residues aspartate 452, valine 453, and glutamate 455 each contribute to the Ca(2+) site. The region spanning 452–488 (DVNECVSNPCQNDATCLDQIGEFQCICMPGYEGVHCE) is the EGF-like 12; calcium-binding domain. 3 disulfides stabilise this stretch: cysteine 456/cysteine 467, cysteine 461/cysteine 476, and cysteine 478/cysteine 487. Residue serine 458 is glycosylated (O-linked (Glc...) serine). Threonine 466 is a glycosylation site (O-linked (Fuc...) threonine). Aspartate 469 and glutamine 470 together coordinate Ca(2+). 3 residues coordinate Ca(2+): asparagine 490, threonine 491, and glutamate 493. Residues 490–526 (NTDECASSPCLHNGRCLDKINEFQCECPTGFTGHLCQ) form the EGF-like 13; calcium-binding domain. 74 disulfide bridges follow: cysteine 494/cysteine 505, cysteine 499/cysteine 514, cysteine 516/cysteine 525, cysteine 532/cysteine 543, cysteine 537/cysteine 552, cysteine 554/cysteine 563, cysteine 570/cysteine 580, cysteine 575/cysteine 589, cysteine 591/cysteine 600, cysteine 607/cysteine 618, cysteine 612/cysteine 627, cysteine 629/cysteine 638, cysteine 645/cysteine 655, cysteine 650/cysteine 664, cysteine 666/cysteine 675, cysteine 682/cysteine 693, cysteine 687/cysteine 702, cysteine 704/cysteine 713, cysteine 720/cysteine 730, cysteine 725/cysteine 739, cysteine 741/cysteine 750, cysteine 757/cysteine 768, cysteine 762/cysteine 777, cysteine 779/cysteine 788, cysteine 795/cysteine 806, cysteine 800/cysteine 815, cysteine 817/cysteine 826, cysteine 833/cysteine 844, cysteine 838/cysteine 855, cysteine 857/cysteine 866, cysteine 873/cysteine 884, cysteine 878/cysteine 893, cysteine 895/cysteine 904, cysteine 911/cysteine 922, cysteine 916/cysteine 931, cysteine 933/cysteine 942, cysteine 949/cysteine 960, cysteine 954/cysteine 969, cysteine 971/cysteine 980, cysteine 987/cysteine 998, cysteine 992/cysteine 1007, cysteine 1009/cysteine 1018, cysteine 1025/cysteine 1036, cysteine 1030/cysteine 1045, cysteine 1047/cysteine 1056, cysteine 1063/cysteine 1074, cysteine 1068/cysteine 1083, cysteine 1085/cysteine 1094, cysteine 1101/cysteine 1122, cysteine 1116/cysteine 1131, cysteine 1133/cysteine 1142, cysteine 1149/cysteine 1160, cysteine 1154/cysteine 1169, cysteine 1171/cysteine 1180, cysteine 1187/cysteine 1198, cysteine 1192/cysteine 1207, cysteine 1209/cysteine 1218, cysteine 1238/cysteine 1253, cysteine 1255/cysteine 1264, cysteine 1271/cysteine 1284, cysteine 1276/cysteine 1293, cysteine 1295/cysteine 1304, cysteine 1311/cysteine 1322, cysteine 1316/cysteine 1334, cysteine 1336/cysteine 1345, cysteine 1352/cysteine 1363, cysteine 1357/cysteine 1372, cysteine 1374/cysteine 1383, cysteine 1391/cysteine 1403, cysteine 1397/cysteine 1414, cysteine 1416/cysteine 1425, cysteine 1449/cysteine 1472, cysteine 1454/cysteine 1467, and cysteine 1463/cysteine 1479. An O-linked (Glc...) serine glycan is attached at serine 496. Ca(2+) is bound by residues aspartate 507 and lysine 508. One can recognise an EGF-like 14; calcium-binding domain in the interval 528 to 564 (DVDECASTPCKNGAKCLDGPNTYTCVCTEGYTGTHCE). Serine 534 is a glycosylation site (O-linked (Glc...) serine). The region spanning 566–601 (DIDECDPDPCHYGSCKDGVATFTCLCRPGYTGHHCE) is the EGF-like 15; calcium-binding domain. The EGF-like 16; calcium-binding domain occupies 603-639 (NINECSSQPCRHGGTCQDRDNAYLCFCLKGTTGPNCE). Serine 609 carries an O-linked (Glc...) serine glycan. The O-linked (Fuc...) threonine glycan is linked to threonine 617. Residues 641–676 (NLDDCASSPCDSGTCLDKIDGYECACEPGYTGSMCN) form the EGF-like 17; calcium-binding domain. Serine 647 carries an O-linked (Glc...) serine glycan. The EGF-like 18; calcium-binding domain maps to 678–714 (NIDECAGNPCHNGGTCEDGINGFTCRCPEGYHDPTCL). Threonine 692 carries an O-linked (Fuc...) threonine glycan. The EGF-like 19; calcium-binding domain occupies 716 to 751 (EVNECNSNPCVHGACRDSLNGYKCDCDPGWSGTNCD). Residue serine 722 is glycosylated (O-linked (Glc...) serine). The region spanning 753 to 789 (NNNECESNPCVNGGTCKDMTSGYVCTCREGFSGPNCQ) is the EGF-like 20 domain. An O-linked (Glc...) serine glycan is attached at serine 759. The O-linked (Fuc...) threonine glycan is linked to threonine 767. Residue serine 784 is glycosylated (O-linked (GlcNAc) serine). One can recognise an EGF-like 21; calcium-binding domain in the interval 791–827 (NINECASNPCLNQGTCIDDVAGYKCNCLLPYTGATCE). Residue serine 797 is glycosylated (O-linked (Glc...) serine). Residue threonine 805 is glycosylated (O-linked (Fuc...) threonine). The EGF-like 22 domain occupies 829-867 (VLAPCAPSPCRNGGECRQSEDYESFSCVCPTGWQGQTCE). The region spanning 869-905 (DINECVLSPCRHGASCQNTHGGYRCHCQAGYSGRNCE) is the EGF-like 23; calcium-binding domain. Positions 907–943 (DIDDCRPNPCHNGGSCTDGINTAFCDCLPGFRGTFCE) constitute an EGF-like 24 domain. O-linked (Fuc) serine glycosylation occurs at serine 921. The 37-residue stretch at 945 to 981 (DINECASDPCRNGANCTDCVDSYTCTCPAGFSGIHCE) folds into the EGF-like 25; calcium-binding domain. Serine 951 carries O-linked (Glc...) serine glycosylation. An N-linked (GlcNAc...) asparagine glycan is attached at asparagine 959. EGF-like domains lie at 983-1019 (NTPD…SYCQ), 1021-1057 (DVNE…PNCQ), 1059-1095 (LVHW…LYCD), 1097-1143 (PSVS…SYCE), and 1145-1181 (LVDE…VNCS). Threonine 997 carries O-linked (Fuc...) threonine glycosylation. Residue serine 1027 is glycosylated (O-linked (Glc...) serine). The O-linked (Fuc...) threonine glycan is linked to threonine 1035. An O-linked (Glc...) serine glycan is attached at serine 1065. Threonine 1159 carries O-linked (Fuc...) threonine glycosylation. Asparagine 1179 carries N-linked (GlcNAc...) asparagine glycosylation. An EGF-like 31; calcium-binding domain is found at 1183–1219 (EIDECLSHPCQNGGTCLDLPNTYKCSCPRGTQGVHCE). The O-linked (Glc...) serine glycan is linked to serine 1189. Residue threonine 1197 is glycosylated (O-linked (Fuc...) threonine). The EGF-like 32; calcium-binding domain maps to 1221–1265 (NVDDCNPPVDPVSRSPKCFNNGTCVDQVGGYSCTCPPGFVGERCE). An N-linked (GlcNAc...) asparagine glycan is attached at asparagine 1241. EGF-like domains lie at 1267-1305 (DVNE…RRCE), 1307-1346 (VING…ATCE), 1348-1384 (DART…PECQ), and 1387-1426 (ASSP…LLCH). O-linked (Glc...) serine glycosylation occurs at serine 1273. Threonine 1362 carries an O-linked (Fuc...) threonine glycan. An O-linked (GlcNAc...) threonine glycan is attached at threonine 1379. O-linked (Fuc...) threonine; alternate glycosylation is present at threonine 1402. Threonine 1402 is a glycosylation site (O-linked (GalNAc...) threonine; alternate). LNR repeat units lie at residues 1449–1489 (CELP…PWKN), 1490–1531 (CTQS…CNPL), and 1532–1571 (YDQY…RLAA). Ca(2+)-binding residues include aspartate 1457, asparagine 1460, aspartate 1475, and aspartate 1478. N-linked (GlcNAc...) asparagine glycosylation is present at asparagine 1489. 5 cysteine pairs are disulfide-bonded: cysteine 1490–cysteine 1514, cysteine 1496–cysteine 1509, cysteine 1505–cysteine 1521, cysteine 1536–cysteine 1549, and cysteine 1545–cysteine 1561. Asparagine 1587 carries N-linked (GlcNAc...) asparagine glycosylation. Threonine 1725 is a glycosylation site (O-linked (GalNAc...) threonine). Residues 1728–1760 (PPPPAQLHFMYVAAAAFVLLFFVGCGVLLSRKR) form an interaction with PSEN1 region. Residues 1736–1756 (FMYVAAAAFVLLFFVGCGVLL) form a helical membrane-spanning segment. Topologically, residues 1757–2555 (SRKRRRQHGQ…QIARIPEAFK (799 aa)) are cytoplasmic. Lysine 1759 participates in a covalent cross-link: Glycyl lysine isopeptide (Lys-Gly) (interchain with G-Cter in ubiquitin). The segment at 1780-1808 (KKKRREPLGEDSVGLKPLKNASDGALMDD) is disordered. Phosphothreonine is present on threonine 1861. ANK repeat units lie at residues 1927–1956 (TGET…DANI), 1960–1990 (MGRT…DLDA), 1994–2023 (DGTT…DVNA), 2027–2056 (LGKS…NKDM), 2060–2089 (REET…NRDI), and 2095–2122 (RLPR…VRSP). Residues 1947-1955 (LLEASADAN) are HIF1AN-binding. The residue at position 1955 (asparagine 1955) is a (3S)-3-hydroxyasparagine; by HIF1AN; partial. The segment at 2014 to 2022 (LINSHADVN) is HIF1AN-binding. (3S)-3-hydroxyasparagine; by HIF1AN is present on asparagine 2022. Disordered regions lie at residues 2151 to 2194 (PGVQ…LDSS), 2379 to 2447 (LVQT…QPLG), and 2483 to 2555 (TPPS…EAFK). The span at 2379–2408 (LVQTQQVQPQNLQMQQQNLQPANIQQQQSL) shows a compositional bias: low complexity. Polar residues predominate over residues 2483 to 2502 (TPPSQHSYSSPVDNTPSHQL). The span at 2512-2527 (PSPESPDQWSSSSPHS) shows a compositional bias: low complexity. Residues 2528–2547 (NVSDWSEGVSSPPTSMQSQI) show a composition bias toward polar residues.

Belongs to the NOTCH family. Heterodimer of a C-terminal fragment N(TM) and an N-terminal fragment N(EC) which are probably linked by disulfide bonds. Interacts with DNER, DTX1, DTX2 and RBPJ/RBPSUH. Also interacts with MAML1, MAML2 and MAML3 which act as transcriptional coactivators for NOTCH1. The NOTCH1 intracellular domain interacts with SNW1; the interaction involves multimerized NOTCH1 NICD and is implicated in a formation of an intermediate preactivation complex which associates with DNA-bound CBF-1/RBPJ. The activated membrane-bound form interacts with AAK1 which promotes NOTCH1 stabilization. Forms a trimeric complex with FBXW7 and SGK1. Interacts with HIF1AN. HIF1AN negatively regulates the function of notch intracellular domain (NICD), accelerating myogenic differentiation. Interacts (via NICD) with SNAI1 (via zinc fingers); the interaction induces SNAI1 degradation via MDM2-mediated ubiquitination and inhibits SNAI1-induced cell invasion. Interacts (via NICD) with MDM2A. Interacts (via NICD) with BCL6; the interaction decreases MAML1 recruitment by NOTCH1 NICD on target genes DNA and inhibits NOTCH1 transactivation activity. Interacts with THBS4. Interacts (via the EGF-like repeat region) with CCN3 (via CTCK domain). Interacts (via EGF-like domains) with DLL4 (via N-terminal DSL and MNNL domains). Interacts with ZMIZ1. Interacts (via NICD domain) with MEGF10 (via the cytoplasmic domain). Interacts with DLL1 and JAG1. Interacts (via NICD domain) with PRAG1. Forms a complex with PRAG1, N1ICD and MAML1, in a MAML1-dependent manner. Interacts (via transmembrane region) with PSEN1; the interaction is direct. Interacts with ZFP64. Synthesized in the endoplasmic reticulum as an inactive form which is proteolytically cleaved by a furin-like convertase in the trans-Golgi network before it reaches the plasma membrane to yield an active, ligand-accessible form. Cleavage results in a C-terminal fragment N(TM) and a N-terminal fragment N(EC). Following ligand binding, it is cleaved by ADAM17 to yield a membrane-associated intermediate fragment called notch extracellular truncation (NEXT). Following endocytosis, this fragment is then cleaved by one of the catalytic subunits of gamma-secretase (PSEN1 or PSEN2), to release a Notch-derived peptide containing the intracellular domain (NICD) from the membrane. Post-translationally, phosphorylated. In terms of processing, O-glycosylated on the EGF-like domains. O-glucosylated at Ser-435 by KDELC1 and KDELC2. Contains both O-linked fucose and O-linked glucose in the EGF-like domains 11, 12 and 13, which are interacting with the residues on DLL4. O-linked glycosylation by GALNT11 is involved in determination of left/right symmetry: glycosylation promotes activation of NOTCH1, possibly by promoting cleavage by ADAM17, modulating the balance between motile and immotile (sensory) cilia at the left-right organiser (LRO). MFNG-, RFNG- and LFNG-mediated modification of O-fucose residues at specific EGF-like domains results in inhibition of its activation by JAG1 and enhancement of its activation by DLL1 via an increased binding to DLL1. Ubiquitinated. Undergoes 'Lys-29'-linked polyubiquitination by ITCH; promotes the lysosomal degradation of non-activated internalized NOTCH1. Deubiquitination by USP12 is required for transport of internalized non-activated receptor from late endosomes to lysosomes for degradation. Monoubiquitination at Lys-1759 is required for activation by gamma-secretase cleavage, it promotes interaction with AAK1, which stabilizes it. Deubiquitination by EIF3F is necessary for nuclear import of activated Notch. Post-translationally, hydroxylated at Asn-1955 by HIF1AN. Hydroxylated at Asn-2022 by HIF1AN. Hydroxylation reduces affinity for HI1AN and may thus indirectly modulate negative regulation of NICD. In fetal tissues most abundant in spleen, brain stem and lung. Also present in most adult tissues where it is found mainly in lymphoid tissues.

Its subcellular location is the cell membrane. The protein resides in the late endosome membrane. The protein localises to the nucleus. Its function is as follows. Functions as a receptor for membrane-bound ligands Jagged-1 (JAG1), Jagged-2 (JAG2) and Delta-1 (DLL1) to regulate cell-fate determination. Upon ligand activation through the released notch intracellular domain (NICD) it forms a transcriptional activator complex with RBPJ/RBPSUH and activates genes of the enhancer of split locus. Affects the implementation of differentiation, proliferation and apoptotic programs. Involved in angiogenesis; negatively regulates endothelial cell proliferation and migration and angiogenic sprouting. Involved in the maturation of both CD4(+) and CD8(+) cells in the thymus. Important for follicular differentiation and possibly cell fate selection within the follicle. During cerebellar development, functions as a receptor for neuronal DNER and is involved in the differentiation of Bergmann glia. Represses neuronal and myogenic differentiation. May play an essential role in postimplantation development, probably in some aspect of cell specification and/or differentiation. May be involved in mesoderm development, somite formation and neurogenesis. May enhance HIF1A function by sequestering HIF1AN away from HIF1A. Required for the THBS4 function in regulating protective astrogenesis from the subventricular zone (SVZ) niche after injury. Involved in determination of left/right symmetry by modulating the balance between motile and immotile (sensory) cilia at the left-right organiser (LRO). In Homo sapiens (Human), this protein is Neurogenic locus notch homolog protein 1 (NOTCH1).